A 185-amino-acid polypeptide reads, in one-letter code: UPF0301 protein MS0260 (185 aa).

Belongs to the UPF0301 (AlgH) family.

The polypeptide is UPF0301 protein MS0260 (Mannheimia succiniciproducens (strain KCTC 0769BP / MBEL55E)).